Here is a 268-residue protein sequence, read N- to C-terminus: MEDFLLSNGYQLGKTIGEGTYSKVKEAFSKKHQRKVAIKVIDKMGGPEEFIQRFLPRELQIVRTLDHKNIIQVYEMLESADGKICLVMELAEGGDVFDCVLNGGPLPESRAKALFRQMVEAIRYCHGCGVAHRDLKCENALLQGFNLKLTDFGFAKVLPKSHRELSQTFCGSTAYAAPEVLQGIPHDSKKGDVWSMGVVLYVMLCASLPFDDTDIPKMLWQQQKGVSFPTHLSISADCQDLLKRLLEPDMILRPSIEEVSWHPWLAST.

One can recognise a Protein kinase domain in the interval 10-265; the sequence is YQLGKTIGEG…IEEVSWHPWL (256 aa). ATP is bound by residues 16–24 and lysine 39; that span reads IGEGTYSKV. Residue aspartate 134 is the Proton acceptor of the active site. Serine 166 is modified (phosphoserine). Threonine 168 is modified (phosphothreonine).

Belongs to the protein kinase superfamily. CAMK Ser/Thr protein kinase family. Mg(2+) serves as cofactor. Mn(2+) is required as a cofactor. Post-translationally, autophosphorylated at Ser-166. Phosphorylation at Thr-168 by PDPK1 activates the serine/threonine protein kinase activity.

It is found in the cell projection. The protein resides in the cilium. The protein localises to the flagellum. The catalysed reaction is L-seryl-[protein] + ATP = O-phospho-L-seryl-[protein] + ADP + H(+). It carries out the reaction L-threonyl-[protein] + ATP = O-phospho-L-threonyl-[protein] + ADP + H(+). With respect to regulation, activated by phosphorylation on Thr-168 by PDPK1. In terms of biological role, serine/threonine protein kinase required for spermatid development and male fertility. The sequence is that of Testis-specific serine/threonine-protein kinase 3 from Homo sapiens (Human).